The chain runs to 433 residues: 3-phosphoshikimate 1-carboxyvinyltransferase (433 aa).

Lysine 23, serine 24, and arginine 28 together coordinate 3-phosphoshikimate. Lysine 23 lines the phosphoenolpyruvate pocket. Positions 95 and 123 each coordinate phosphoenolpyruvate. The 3-phosphoshikimate site is built by serine 170, serine 171, glutamine 172, serine 198, aspartate 317, and lysine 344. Glutamine 172 serves as a coordination point for phosphoenolpyruvate. The active-site Proton acceptor is aspartate 317. Phosphoenolpyruvate is bound by residues arginine 348, arginine 391, and lysine 416.

The protein belongs to the EPSP synthase family. As to quaternary structure, monomer.

The protein localises to the cytoplasm. It carries out the reaction 3-phosphoshikimate + phosphoenolpyruvate = 5-O-(1-carboxyvinyl)-3-phosphoshikimate + phosphate. Its pathway is metabolic intermediate biosynthesis; chorismate biosynthesis; chorismate from D-erythrose 4-phosphate and phosphoenolpyruvate: step 6/7. Functionally, catalyzes the transfer of the enolpyruvyl moiety of phosphoenolpyruvate (PEP) to the 5-hydroxyl of shikimate-3-phosphate (S3P) to produce enolpyruvyl shikimate-3-phosphate and inorganic phosphate. This chain is 3-phosphoshikimate 1-carboxyvinyltransferase, found in Neisseria meningitidis serogroup B (strain ATCC BAA-335 / MC58).